The sequence spans 493 residues: Succinate-semialdehyde dehydrogenase [NADP(+)] 2 (493 aa).

242 to 247 (GSTNVG) lines the NAD(+) pocket. E264 is an active-site residue. C298 (nucleophile) is an active-site residue.

This sequence belongs to the aldehyde dehydrogenase family. Homotetramer.

It is found in the cytoplasm. The enzyme catalyses succinate semialdehyde + NAD(+) + H2O = succinate + NADH + 2 H(+). It catalyses the reaction succinate semialdehyde + NADP(+) + H2O = succinate + NADPH + 2 H(+). It functions in the pathway amino-acid degradation; 4-aminobutanoate degradation. Functionally, catalyzes the oxidation of succinate semialdehyde to succinate. Can utilize both NAD(+) or NADP(+) as a coenzyme. Functions in the GABA shunt, which allows to bypass 2 reactions in the TCA cycle by removing alpha-ketoglutarate from the cycle and feeding succinate and NADH back into the cycle. The chain is Succinate-semialdehyde dehydrogenase [NADP(+)] 2 (ssd2) from Schizosaccharomyces pombe (strain 972 / ATCC 24843) (Fission yeast).